Here is a 250-residue protein sequence, read N- to C-terminus: Ubiquinone/menaquinone biosynthesis C-methyltransferase UbiE (250 aa).

S-adenosyl-L-methionine contacts are provided by residues Thr-74, Asp-94, 122–123, and Ser-139; that span reads DA.

It belongs to the class I-like SAM-binding methyltransferase superfamily. MenG/UbiE family.

The enzyme catalyses a 2-demethylmenaquinol + S-adenosyl-L-methionine = a menaquinol + S-adenosyl-L-homocysteine + H(+). The catalysed reaction is a 2-methoxy-6-(all-trans-polyprenyl)benzene-1,4-diol + S-adenosyl-L-methionine = a 5-methoxy-2-methyl-3-(all-trans-polyprenyl)benzene-1,4-diol + S-adenosyl-L-homocysteine + H(+). It participates in quinol/quinone metabolism; menaquinone biosynthesis; menaquinol from 1,4-dihydroxy-2-naphthoate: step 2/2. Its pathway is cofactor biosynthesis; ubiquinone biosynthesis. Its function is as follows. Methyltransferase required for the conversion of demethylmenaquinol (DMKH2) to menaquinol (MKH2) and the conversion of 2-polyprenyl-6-methoxy-1,4-benzoquinol (DDMQH2) to 2-polyprenyl-3-methyl-6-methoxy-1,4-benzoquinol (DMQH2). This Paracoccus denitrificans (strain Pd 1222) protein is Ubiquinone/menaquinone biosynthesis C-methyltransferase UbiE.